Consider the following 260-residue polypeptide: Peptidase inhibitor 15-A (260 aa).

A signal peptide spans 1–21; it reads MNENRLAIDILLLCISCGASA. Positions 22 to 62 are excised as a propeptide; that stretch reads LAGFSPTASSSLPATNLTDIGFAPPKYLTEAANIPKTRRKR. N-linked (GlcNAc...) asparagine glycans are attached at residues N37 and N126. Positions 73-213 constitute an SCP domain; that stretch reads LDYHNKVRGK…KRATYLVCNY (141 aa).

Belongs to the CRISP family.

It is found in the secreted. Functionally, serine protease inhibitor which displays weak inhibitory activity against trypsin. May play a role in facial patterning during embryonic development. This chain is Peptidase inhibitor 15-A (pi15a), found in Danio rerio (Zebrafish).